The chain runs to 209 residues: Ribosome maturation factor RimM (209 aa).

The 76-residue stretch at 103–178 (EGATYVSDLV…RIEMVLPQGM (76 aa)) folds into the PRC barrel domain. The disordered stretch occupies residues 184–209 (PLSKAEKERQKSEADETREAGERRKR). Positions 187–209 (KAEKERQKSEADETREAGERRKR) are enriched in basic and acidic residues.

It belongs to the RimM family. As to quaternary structure, binds ribosomal protein uS19.

The protein localises to the cytoplasm. In terms of biological role, an accessory protein needed during the final step in the assembly of 30S ribosomal subunit, possibly for assembly of the head region. Essential for efficient processing of 16S rRNA. May be needed both before and after RbfA during the maturation of 16S rRNA. It has affinity for free ribosomal 30S subunits but not for 70S ribosomes. In Koribacter versatilis (strain Ellin345), this protein is Ribosome maturation factor RimM.